The sequence spans 548 residues: MAAKDVKFGNDARVKMLRGVNVLADAVKVTLGPKGRNVVLDKSFGAPTITKDGVSVAREIELEDKFENMGAQMVKEVASKANDAAGDGTTTATVLAQSIVNEGLKAVAAGMNPMDLKRGIDKAVIAAVEELKKLSVPCSDSKAIAQVGTISANSDETVGELIALAMEKVGKEGVITVEEGTGLQDELDVVEGMQFDRGYLSPYFINKPETGAVELESPFILLADKKISNIRELLPVLEAVAKAGKPLLIVAEDVEGEALATLVVNTMRGIVKVAAVKAPGFGDRRKAMLQDIAVLTGGTVISEEIGMELEKAGLEDMGQAKRVVISKDTTTIIDGTGEEVAISGRVTQIRQQIEDATSDYDREKLQERVAKLAGGVAVLKVGAATEVEMKEKKARVEDALHATRAAVEEGVVAGGGVALVRVAAMLTELRGQNEDQNVGIKVALRAMESPLRQIVSNAGEEPSVVTNAVKAGEGNYGYNAQTEEYGNMIDFGILDPTKVTRSALQYAASVAGLMITTECMVTDLPKGDAPDLGAGGGMGGMGGMGGMM.

ATP contacts are provided by residues 30–33, Lys-51, 87–91, Gly-415, and Asp-495; these read TLGP and DGTTT.

The protein belongs to the chaperonin (HSP60) family. As to quaternary structure, forms a cylinder of 14 subunits composed of two heptameric rings stacked back-to-back. Interacts with the co-chaperonin GroES.

It localises to the cytoplasm. The catalysed reaction is ATP + H2O + a folded polypeptide = ADP + phosphate + an unfolded polypeptide.. Together with its co-chaperonin GroES, plays an essential role in assisting protein folding. The GroEL-GroES system forms a nano-cage that allows encapsulation of the non-native substrate proteins and provides a physical environment optimized to promote and accelerate protein folding. The polypeptide is Chaperonin GroEL (Erwinia tasmaniensis (strain DSM 17950 / CFBP 7177 / CIP 109463 / NCPPB 4357 / Et1/99)).